A 226-amino-acid polypeptide reads, in one-letter code: Ribonuclease 3 (226 aa).

The region spanning 7–129 (LPRLCRTLGY…IIGAVYLDAD (123 aa)) is the RNase III domain. Residue Glu42 coordinates Mg(2+). Residue Asp46 is part of the active site. Mg(2+) contacts are provided by Asp115 and Glu118. Glu118 is an active-site residue. The region spanning 156-226 (DAKTLLQEYL…AAQVLELLNQ (71 aa)) is the DRBM domain.

Belongs to the ribonuclease III family. As to quaternary structure, homodimer. Mg(2+) serves as cofactor.

Its subcellular location is the cytoplasm. It catalyses the reaction Endonucleolytic cleavage to 5'-phosphomonoester.. Digests double-stranded RNA. Involved in the processing of primary rRNA transcript to yield the immediate precursors to the large and small rRNAs (23S and 16S). Processes some mRNAs, and tRNAs when they are encoded in the rRNA operon. Processes pre-crRNA and tracrRNA of type II CRISPR loci if present in the organism. The chain is Ribonuclease 3 from Shewanella amazonensis (strain ATCC BAA-1098 / SB2B).